A 255-amino-acid chain; its full sequence is 3-deoxy-manno-octulosonate cytidylyltransferase (255 aa).

The protein belongs to the KdsB family.

The protein localises to the cytoplasm. It catalyses the reaction 3-deoxy-alpha-D-manno-oct-2-ulosonate + CTP = CMP-3-deoxy-beta-D-manno-octulosonate + diphosphate. It functions in the pathway nucleotide-sugar biosynthesis; CMP-3-deoxy-D-manno-octulosonate biosynthesis; CMP-3-deoxy-D-manno-octulosonate from 3-deoxy-D-manno-octulosonate and CTP: step 1/1. It participates in bacterial outer membrane biogenesis; lipopolysaccharide biosynthesis. Its function is as follows. Activates KDO (a required 8-carbon sugar) for incorporation into bacterial lipopolysaccharide in Gram-negative bacteria. The chain is 3-deoxy-manno-octulosonate cytidylyltransferase from Cellvibrio japonicus (strain Ueda107) (Pseudomonas fluorescens subsp. cellulosa).